A 127-amino-acid polypeptide reads, in one-letter code: Small ribosomal subunit protein uS11 (127 aa).

The protein belongs to the universal ribosomal protein uS11 family. Part of the 30S ribosomal subunit. Interacts with proteins S7 and S18. Binds to IF-3.

Functionally, located on the platform of the 30S subunit, it bridges several disparate RNA helices of the 16S rRNA. Forms part of the Shine-Dalgarno cleft in the 70S ribosome. This is Small ribosomal subunit protein uS11 from Rickettsia bellii (strain RML369-C).